Consider the following 90-residue polypeptide: Probable Fe(2+)-trafficking protein (90 aa).

It belongs to the Fe(2+)-trafficking protein family.

Functionally, could be a mediator in iron transactions between iron acquisition and iron-requiring processes, such as synthesis and/or repair of Fe-S clusters in biosynthetic enzymes. The protein is Probable Fe(2+)-trafficking protein of Halorhodospira halophila (strain DSM 244 / SL1) (Ectothiorhodospira halophila (strain DSM 244 / SL1)).